A 1780-amino-acid polypeptide reads, in one-letter code: Callose synthase 12 (1780 aa).

Residues methionine 1–arginine 302 lie on the Cytoplasmic side of the membrane. Residues serine 303–tryptophan 323 traverse the membrane as a helical segment. Over glutamate 324–arginine 348 the chain is Extracellular. Residues leucine 349–alanine 369 traverse the membrane as a helical segment. Topologically, residues serine 370–methionine 386 are cytoplasmic. The helical transmembrane segment at leucine 387–isoleucine 407 threads the bilayer. Residues tryptophan 408 to glutamine 427 are Extracellular-facing. The chain crosses the membrane as a helical span at residues phenylalanine 428–isoleucine 448. The Cytoplasmic segment spans residues proline 449 to lysine 489. Residues tyrosine 490 to valine 510 form a helical membrane-spanning segment. Residues lysine 511–valine 542 lie on the Extracellular side of the membrane. Residues alanine 543–isoleucine 563 traverse the membrane as a helical segment. Over tyrosine 564 to threonine 1348 the chain is Cytoplasmic. Residues threonine 1349–glycine 1369 form a helical membrane-spanning segment. The Extracellular segment spans residues arginine 1370–glycine 1394. A helical membrane pass occupies residues valine 1395 to valine 1415. The Cytoplasmic segment spans residues glutamate 1416–glutamate 1421. Residues glycine 1422 to tyrosine 1442 form a helical membrane-spanning segment. At threonine 1443 to histidine 1489 the chain is on the extracellular side. The chain crosses the membrane as a helical span at residues phenylalanine 1490–alanine 1510. At lysine 1511–tyrosine 1516 the chain is on the cytoplasmic side. A helical transmembrane segment spans residues isoleucine 1517 to phenylalanine 1537. Topologically, residues asparagine 1538 to lysine 1588 are extracellular. The chain crosses the membrane as a helical span at residues alanine 1589 to valine 1609. The Cytoplasmic portion of the chain corresponds to tyrosine 1610 to serine 1620. The helical transmembrane segment at leucine 1621 to isoleucine 1641 threads the bilayer. Over glutamine 1642 to arginine 1657 the chain is Extracellular. The helical transmembrane segment at leucine 1658–threonine 1678 threads the bilayer. The Cytoplasmic segment spans residues histidine 1679–serine 1681. The chain crosses the membrane as a helical span at residues phenylalanine 1682–isoleucine 1702. The Extracellular portion of the chain corresponds to alanine 1703–aspartate 1728. N-linked (GlcNAc...) asparagine glycosylation is present at asparagine 1712. A helical transmembrane segment spans residues isoleucine 1729–glutamine 1749. Topologically, residues serine 1750 to valine 1780 are cytoplasmic.

It belongs to the glycosyltransferase 48 family. In terms of tissue distribution, highly expressed in flowers. Expressed at low levels in roots, leaves, stems, cauline leaves and siliques.

It localises to the cell membrane. It carries out the reaction [(1-&gt;3)-beta-D-glucosyl](n) + UDP-alpha-D-glucose = [(1-&gt;3)-beta-D-glucosyl](n+1) + UDP + H(+). Functionally, involved in sporophytic and gametophytic development. Required for normal leaf development. During pollen formation, required for the formation of the callose wall separating the tetraspores of the tetrad (interstitial wall), but not for the callose wall surrounding the pollen mother cells (peripheral wall). Functionally redudant to CALS11 (GSL1). May play a role later in pollen grain maturation. Required for callose formation induced by wounding and pathogen attack. May interfere with salicylic acid-induced signaling pathway during defense response. During plant growth and development, callose is found as a transitory component of the cell plate in dividing cells, is a major component of pollen mother cell walls and pollen tubes, and is found as a structural component of plasmodesmatal canals. The protein is Callose synthase 12 (CALS12) of Arabidopsis thaliana (Mouse-ear cress).